A 446-amino-acid polypeptide reads, in one-letter code: N-succinylarginine dihydrolase (446 aa).

Substrate-binding positions include 21-30 (AGLSWGNVAS), N112, and 139-140 (HR). E176 is a catalytic residue. R216 lines the substrate pocket. H252 is a catalytic residue. Substrate is bound by residues D254 and N364. C370 serves as the catalytic Nucleophile.

Belongs to the succinylarginine dihydrolase family. Homodimer.

The catalysed reaction is N(2)-succinyl-L-arginine + 2 H2O + 2 H(+) = N(2)-succinyl-L-ornithine + 2 NH4(+) + CO2. Its pathway is amino-acid degradation; L-arginine degradation via AST pathway; L-glutamate and succinate from L-arginine: step 2/5. Functionally, catalyzes the hydrolysis of N(2)-succinylarginine into N(2)-succinylornithine, ammonia and CO(2). The sequence is that of N-succinylarginine dihydrolase from Marinobacter nauticus (strain ATCC 700491 / DSM 11845 / VT8) (Marinobacter aquaeolei).